A 255-amino-acid polypeptide reads, in one-letter code: Hydroxyacylglutathione hydrolase (255 aa).

Residues H53, H55, D57, H58, H111, D128, and H166 each coordinate Zn(2+).

This sequence belongs to the metallo-beta-lactamase superfamily. Glyoxalase II family. As to quaternary structure, monomer. It depends on Zn(2+) as a cofactor.

The catalysed reaction is an S-(2-hydroxyacyl)glutathione + H2O = a 2-hydroxy carboxylate + glutathione + H(+). The protein operates within secondary metabolite metabolism; methylglyoxal degradation; (R)-lactate from methylglyoxal: step 2/2. Functionally, thiolesterase that catalyzes the hydrolysis of S-D-lactoyl-glutathione to form glutathione and D-lactic acid. The polypeptide is Hydroxyacylglutathione hydrolase (Nitrosomonas eutropha (strain DSM 101675 / C91 / Nm57)).